A 59-amino-acid chain; its full sequence is ATP synthase subunit J, mitochondrial (59 aa).

The chain crosses the membrane as a helical span at residues Ile-9–Tyr-25.

Belongs to the ATPase j subunit family. F-type ATPases have 2 components, CF(1) - the catalytic core - and CF(0) - the membrane proton channel. In yeast, the dimeric form of ATP synthase consists of 17 polypeptides: alpha, beta, gamma, delta, epsilon, 4 (B), 5 (OSCP), 6 (A), 8, 9 (C), d, E (Tim11), f, g, h, i/j and k.

It is found in the mitochondrion membrane. Mitochondrial membrane ATP synthase (F(1)F(0) ATP synthase or Complex V) produces ATP from ADP in the presence of a proton gradient across the membrane which is generated by electron transport complexes of the respiratory chain. F-type ATPases consist of two structural domains, F(1) - containing the extramembraneous catalytic core and F(0) - containing the membrane proton channel, linked together by a central stalk and a peripheral stalk. During catalysis, ATP synthesis in the catalytic domain of F(1) is coupled via a rotary mechanism of the central stalk subunits to proton translocation. Part of the complex F(0) domain. Minor subunit located with subunit a in the membrane. The protein is ATP synthase subunit J, mitochondrial (ATP18) of Saccharomyces cerevisiae (strain ATCC 204508 / S288c) (Baker's yeast).